We begin with the raw amino-acid sequence, 140 residues long: Large ribosomal subunit protein uL22 (140 aa).

It belongs to the universal ribosomal protein uL22 family. In terms of assembly, part of the 50S ribosomal subunit.

Its function is as follows. This protein binds specifically to 23S rRNA; its binding is stimulated by other ribosomal proteins, e.g. L4, L17, and L20. It is important during the early stages of 50S assembly. It makes multiple contacts with different domains of the 23S rRNA in the assembled 50S subunit and ribosome. The globular domain of the protein is located near the polypeptide exit tunnel on the outside of the subunit, while an extended beta-hairpin is found that lines the wall of the exit tunnel in the center of the 70S ribosome. The sequence is that of Large ribosomal subunit protein uL22 from Parafrankia sp. (strain EAN1pec).